Here is a 2200-residue protein sequence, read N- to C-terminus: MENTENKILDKRKEYEKEIYNKEIDQCDDNNINREINYLVYRWLNSQNGIDKNLVTSLFQDFNKNDLLPKKVNWLGQQENFTSNELNEKYKHIQSDHIKSIFSSYRDLAIQHGHFSKLPFQINTLLGDNAYSMIPKGFNDKKDNDNNGDNNLLNKEKIPDNNNNNNSSSSSSSNSNTNKKKIKVSYLYNRPQVVTPTALQPENTTNTTTTTTATTTTTTTTTTTNNTNVQTTPTNTTNTTLTTPPPQIPILPTTVPDIDIQQQQQQQQQQQQQTISKSKNEDINNNNNILSIQRNRYKSFTMMRFTENPFDFSIPIPVKLSGQEVISKSLKSTSQLPISFYSNFKNSLIVYGHKAPTYCLQFDKSGRLYFTGSDDHLVKVWSTYSGRLIATLRGHLGDITDMCTSFDNSLLATASNDNVIRIWNLNSNQYDSIASLTGHDPSVNNTITSISFLSNPTTRLLVSSDSFGQCKLWNLDKSNHVISLSLNDNGSQSTINTGNINDEQIDTEMITDAEVPILTATTITTAITTTATTATATIATTTTTTTPGKTNEITGTTMNKGGTLIVASVDSSLKIWSTLFNPPKLVNTLEGHPTTILALQYSHGSDAIVSGSYDGTVIIWRHSGGPKWDHVIFNIKNTQRPNQANSHPKKVARSKATFKNVIWSHDDRFIITTDYNMIRVWNSLDGSFHLEMAEHTSEVYVTSCHPFDSRLIMSSGYDSQVILWSIETGEIIKKFVLQEPGFQCQILDGCFSPDGQKFIVTNSTGKWFMFELGLGSDINNLKKLVPNEQYFLTDYHPLIRDANGNVLDELTQTPPHLMPRAMLVNYQGLPYPDHYNFTDQDAIYHLEPYKNTSNYKRDLKIQKEFERREVYTFNQGNPSNIPSHPIVIFVASEPKPQPKKIPKKPRRPWDQIEEEIIDDEIIFPSDPSDEDFNPSDASENSSEDEQQQQHQQQQQDDDDDDDDDEDYDSDGKKMSTRKKSKIKADKRKKRLLKQSKKFTRRNTSPSKFNEIMNTFDLPEDDDNNSNNNNRKAVSNKRLSNKQKKRYNLINDGEIEMDDDDQYLNDNILDSDDNDYEHRNRYDNDEFSGSESYNGSDGGGGGGDDDSDNSSDNSSENDSSANGSDSDYSGSKSNKNKRGDKSKRNKKGKKNVKNKKVQKRGRKKSSTSSSSSTSHNQNHLTASALKKLNDIRKKKEILPVCPKWLSITSTTSETFYSPQVGDFIFYFYQGHTKYLEKFPPNGIESNLDNKSIVNYILNNNNINNNNNNNNNNNNNNNNNNNNNNNGVDDQQINSDDDDSQKIIKKSYQECIIKNLNYFISPDGTHKVVITLLPVFDQQVPPQNQNDESNFYTVIYHVSDIPDYLVLASKVRKSMLTDWTVPNKRFRMFYPASGWYNGTIIEISDSDPLFPNSPWENIKVLWDDTEEEDRVNYWEIDEKFDDDQNPQKIKEIKDENENEKVIENNQQQQQQQPQQQPQQQPIQNNQQLSINNTNVNNNNNNNNNNNNNNNNNNNNNNNNNNNNNSLNGGLVDYSGNNNNNNNNNFNYNSNNNLSMSGILDYTNFNNNNNNFMNYNMYQGNYNGMMMNNNTSNYSYLDPNNSNMYMQTYPQNSTMQNQQQPQLNNIYYNSQLQPTNYNYTNNFNTNYSNFNNSSSNIMNYNTNNNFNSPPTATTSNTTTTTTTTTETSNNNNNNNNNNNNNNNNNNFKDNILRIKIQYVESIEDEKIENLKKEMKEFLENDEITDIYSEPVDLKLYPLYIRFVPHPMDISTIIKRLESSYYRSLDAIYFDAKLIMIDAYVYNKPNTMVAKNSKLVFHRISDILKEAANYTPSDILLQSGGSFDSFTLKSMAADKDDSQLDDEDDSMVSGVTNDDDDDDDNLANNNHGNNKSRNGDGLEGDISISDSEHDNSKTGKNITRSLLSPSEDEGGINVNRTPSKRGRKKANATTTTTTTTTTTSSTPSKRLITGRLTRSRSNQSNEESDDDGFIDDNNSSHQNGGKILDDSDNDDKNQNGTDNDYNDDDDDDDNDGDSTNKKRKSIKNQTEPITKRQRTNRLIFEDEDEDDNNQEEDEEDYQEKPKPKPRSKQTTPKVTTPRKRGRKKIDQSEEEEDEDQSDVNSNNNSDNESGGEDGYSGEDGSESESNNGGDIDDEEFLNLLEKPKSKPKGRGRPSFKNNNNNNNINNNVNLTPSKRGRGRPPKSN.

Disordered regions lie at residues 137–178 (GFND…SNTN), 194–245 (VTPT…TTPP), and 259–288 (DIQQQQQQQQQQQQQTISKSKNEDINNNNN). Low complexity-rich tracts occupy residues 161–176 (NNNNNNSSSSSSSNSN), 203–242 (NTTNTTTTTTATTTTTTTTTTTNNTNVQTTPTNTTNTTLT), and 259–273 (DIQQQQQQQQQQQQQ). 8 WD repeats span residues 352–391 (GHKAPTYCLQFDKSGRLYFTGSDDHLVKVWSTYSGRLIAT), 394–433 (GHLGDITDMCTSFDNSLLATASNDNVIRIWNLNSNQYDSI), 442–483 (SVNN…HVIS), 548–586 (GKTNEITGTTMNKGGTLIVASVDSSLKIWSTLFNPPKLV), 591–630 (GHPTTILALQYSHGSDAIVSGSYDGTVIIWRHSGGPKWDH), 653–691 (RSKATFKNVIWSHDDRFIITTDYNMIRVWNSLDGSFHLE), 694–736 (EHTS…KKFV), and 741–780 (GFQCQILDGCFSPDGQKFIVTNSTGKWFMFELGLGSDINN). 2 stretches are compositionally biased toward acidic residues: residues 918–933 (DDEIIFPSDPSDEDFN) and 955–968 (QDDDDDDDDDEDYD). Disordered regions lie at residues 918 to 1180 (DDEI…NHLT), 1262 to 1297 (NNNNNNNNNNNNNNNNNNNNNNNGVDDQQINSDDDD), 1461 to 1538 (ENNQ…NNNN), and 1662 to 1703 (NFNS…NNNN). The span at 974–1000 (MSTRKKSKIKADKRKKRLLKQSKKFTR) shows a compositional bias: basic residues. The segment covering 1052 to 1074 (GEIEMDDDDQYLNDNILDSDDND) has biased composition (acidic residues). A compositionally biased stretch (low complexity) spans 1109-1132 (SSDNSSENDSSANGSDSDYSGSKS). A compositionally biased stretch (basic residues) spans 1133-1164 (NKNKRGDKSKRNKKGKKNVKNKKVQKRGRKKS). Composition is skewed to low complexity over residues 1262 to 1292 (NNNNNNNNNNNNNNNNNNNNNNNGVDDQQIN) and 1461 to 1525 (ENNQ…NSLN). Residues 1722–1823 (EKIENLKKEM…HRISDILKEA (102 aa)) enclose the Bromo domain. Positions 1850–2200 (DKDDSQLDDE…RGRGRPPKSN (351 aa)) are disordered. Residues 1878-1888 (LANNNHGNNKS) show a composition bias toward low complexity. Positions 1910–1920 (TGKNITRSLLS) are enriched in polar residues. The span at 1945 to 1958 (TTTTTTTTTTTSST) shows a compositional bias: low complexity. 3 stretches are compositionally biased toward acidic residues: residues 2016-2028 (DYNDDDDDDDNDG), 2057-2073 (EDEDEDDNNQEEDEEDY), and 2104-2113 (SEEEEDEDQS). Over residues 2114–2124 (DVNSNNNSDNE) the composition is skewed to low complexity. Acidic residues predominate over residues 2125–2138 (SGGEDGYSGEDGSE). Positions 2170-2185 (SFKNNNNNNNINNNVN) are enriched in low complexity. The span at 2190-2200 (KRGRGRPPKSN) shows a compositional bias: basic residues.

The sequence is that of Bromodomain and WD repeat-containing DDB_G0285837 from Dictyostelium discoideum (Social amoeba).